The following is a 403-amino-acid chain: 4-hydroxyphenylpyruvate dioxygenase (403 aa).

VOC domains lie at 25–169 (GYDH…LVER) and 201–359 (RIDH…LFTK). Fe cation-binding residues include H204, H287, and E370.

The protein belongs to the 4HPPD family. In terms of assembly, homodimer. Fe cation serves as cofactor.

It catalyses the reaction 3-(4-hydroxyphenyl)pyruvate + O2 = homogentisate + CO2. It participates in amino-acid degradation; L-phenylalanine degradation; acetoacetate and fumarate from L-phenylalanine: step 3/6. Its function is as follows. 4-hydroxyphenylpyruvate dioxygenase; part of the L-tyrosine degradation gene cluster that mediates the biosynthesis of the brownish pigment pyomelanin as an alternative melanin. The 4-hydroxyphenylpyruvate dioxygenase hppD catalyzes the conversion of 4-hydroxyphenylpyruvate to homogentisic acid (HGA). The protein hmgX is crucial for this conversion and thus, probably functions as an accessory factor to mediate specific activity of hppD. The homogentisate 1,2-dioxygenase hmgA is then involved in the cleavage of the aromatic ring of HGA and its conversion to 4-maleylacetoacetate. When hmgA activity is lowered by the cell wall integrity (CWI) signaling pathway, HGA accumulates and leads to the production of pyomelanin through benzoquinone acetic acid after oxidation and polymerization. On the opposite, in non-stress conditions, both hppD and hmgA activities are balanced and HGA is degraded into 4-maleylacetoacetate. 4-maleylacetoacetate is further converted to 4-fumarylacetoacetate by the maleylacetoacetate isomerase maiA, which is degraded into fumarate and acetoacetate by the fumarylacetoacetase fahA. This Aspergillus fumigatus (strain ATCC MYA-4609 / CBS 101355 / FGSC A1100 / Af293) (Neosartorya fumigata) protein is 4-hydroxyphenylpyruvate dioxygenase.